Consider the following 82-residue polypeptide: Mu-conotoxin MrVIA (82 aa).

The signal sequence occupies residues 1–22; the sequence is MKLTCMMIVAVLFLTAWTLVMA. Positions 23-49 are excised as a propeptide; it reads DDSNNGLANHFSKSRDEMEDPEASKLE. Intrachain disulfides connect Cys53–Cys71, Cys60–Cys76, and Cys70–Cys81.

Expressed by the venom duct.

It is found in the secreted. Its function is as follows. MuO-conotoxins are gating-modifier toxins that inhibit sodium current by trapping the domain II voltage sensor in the closed position to prevent opening of the sodium channel. This toxin inhibits rNav1.2/SCN2A (IC(50)=532 nM), rNav1.4/SCN4A (IC(50)=438 nM) and rNav1.7/SCN9A (IC(50)=345 nM). It blocks Nav channels by interacting mainly with the C-terminal part of the pore loop of domain-3. It does not bind on site 1. At small concentration, this toxin also acts as a calcium current agonist, whereas at higher doses it blocks fast-inactivating calcium current. This chain is Mu-conotoxin MrVIA, found in Conus marmoreus (Marble cone).